Here is a 128-residue protein sequence, read N- to C-terminus: Probable 4-amino-4-deoxy-L-arabinose-phosphoundecaprenol flippase subunit ArnF (128 aa).

Residues M1 to G2 are Cytoplasmic-facing. A helical membrane pass occupies residues L3–A23. The Periplasmic portion of the chain corresponds to A24–D35. A helical transmembrane segment spans residues F36–G56. Residues Y57–A76 lie on the Cytoplasmic side of the membrane. The chain crosses the membrane as a helical span at residues Y77–W97. Over E98–T100 the chain is Periplasmic. A helical transmembrane segment spans residues F101–L121. Over P122–Y128 the chain is Cytoplasmic.

The protein belongs to the ArnF family. As to quaternary structure, heterodimer of ArnE and ArnF.

It is found in the cell inner membrane. The protein operates within bacterial outer membrane biogenesis; lipopolysaccharide biosynthesis. Its function is as follows. Translocates 4-amino-4-deoxy-L-arabinose-phosphoundecaprenol (alpha-L-Ara4N-phosphoundecaprenol) from the cytoplasmic to the periplasmic side of the inner membrane. This is Probable 4-amino-4-deoxy-L-arabinose-phosphoundecaprenol flippase subunit ArnF from Shigella sonnei (strain Ss046).